Consider the following 132-residue polypeptide: Ribosome-binding factor A (132 aa).

The disordered stretch occupies residues 113-132 (EANSTRAKDDDEADAPAKDD).

Belongs to the RbfA family. As to quaternary structure, monomer. Binds 30S ribosomal subunits, but not 50S ribosomal subunits or 70S ribosomes.

The protein resides in the cytoplasm. Its function is as follows. One of several proteins that assist in the late maturation steps of the functional core of the 30S ribosomal subunit. Associates with free 30S ribosomal subunits (but not with 30S subunits that are part of 70S ribosomes or polysomes). Required for efficient processing of 16S rRNA. May interact with the 5'-terminal helix region of 16S rRNA. The sequence is that of Ribosome-binding factor A from Burkholderia ambifaria (strain MC40-6).